Consider the following 305-residue polypeptide: MKKAVSVILTLSLFLLTACSLEPPQWAKPSNSGNKKEFTIGLSVSTLNNPFFVSLKKGIEKEAKKRGMKVIIVDAQNDSSKQTSDVEDLIQQGVDALLINPTDSSAISTAVESANAVGVPVVTIDRSAEQGKVETLVASDNVKGGEMAAAFIADKLGKGAKVAELEGVPGASATRERGSGFHNIADQKLQVVTKQSADFDRTKGLTVMENLLQGHPDIQAVFAHNDEMALGALEAINSSGKDILVIGFDGNKDALASIKDRKLSATVAQQPELIGKLATEAADDILHGKKVQKTISAPLKLETQK.

An N-terminal signal peptide occupies residues 1–18 (MKKAVSVILTLSLFLLTA). The N-palmitoyl cysteine moiety is linked to residue Cys19. Cys19 carries the S-diacylglycerol cysteine lipid modification.

This sequence belongs to the bacterial solute-binding protein 2 family. As to quaternary structure, the complex is composed of an ATP-binding protein (RbsA), two transmembrane proteins (RbsC) and a solute-binding protein (RbsB). Interacts with FloT.

Its subcellular location is the cell membrane. It is found in the membrane raft. In terms of biological role, part of the ABC transporter complex RbsABC involved in ribose import. Binds ribose. This chain is Ribose import binding protein RbsB (rbsB), found in Bacillus subtilis (strain 168).